A 217-amino-acid polypeptide reads, in one-letter code: Pyridoxine/pyridoxamine 5'-phosphate oxidase (217 aa).

Residues 13-16 (RREY) and Lys71 contribute to the substrate site. FMN-binding positions include 66 to 71 (RIVLLK), 81 to 82 (YT), Arg87, Lys88, and Gln110. Substrate contacts are provided by Tyr128, Arg132, and Ser136. FMN-binding positions include 145 to 146 (QS) and Trp190. Position 196–198 (196–198 (RLH)) interacts with substrate. Arg200 is an FMN binding site.

Belongs to the pyridoxamine 5'-phosphate oxidase family. Homodimer. It depends on FMN as a cofactor.

It catalyses the reaction pyridoxamine 5'-phosphate + O2 + H2O = pyridoxal 5'-phosphate + H2O2 + NH4(+). It carries out the reaction pyridoxine 5'-phosphate + O2 = pyridoxal 5'-phosphate + H2O2. It functions in the pathway cofactor metabolism; pyridoxal 5'-phosphate salvage; pyridoxal 5'-phosphate from pyridoxamine 5'-phosphate: step 1/1. It participates in cofactor metabolism; pyridoxal 5'-phosphate salvage; pyridoxal 5'-phosphate from pyridoxine 5'-phosphate: step 1/1. In terms of biological role, catalyzes the oxidation of either pyridoxine 5'-phosphate (PNP) or pyridoxamine 5'-phosphate (PMP) into pyridoxal 5'-phosphate (PLP). The polypeptide is Pyridoxine/pyridoxamine 5'-phosphate oxidase (Yersinia pestis bv. Antiqua (strain Antiqua)).